Reading from the N-terminus, the 232-residue chain is Ribonuclease 3 (232 aa).

Residues 5-134 form the RNase III domain; the sequence is QTVLKNHFAI…FLGALLLDKD (130 aa). Mg(2+) is bound at residue Glu47. Asp51 is a catalytic residue. Asp120 and Glu123 together coordinate Mg(2+). Glu123 is a catalytic residue. In terms of domain architecture, DRBM spans 160–229; the sequence is DYKTHLQELL…AKNAVEKGLD (70 aa).

It belongs to the ribonuclease III family. In terms of assembly, homodimer. Mg(2+) serves as cofactor.

It is found in the cytoplasm. It catalyses the reaction Endonucleolytic cleavage to 5'-phosphomonoester.. In terms of biological role, digests double-stranded RNA. Involved in the processing of primary rRNA transcript to yield the immediate precursors to the large and small rRNAs (23S and 16S). Processes some mRNAs, and tRNAs when they are encoded in the rRNA operon. Processes pre-crRNA and tracrRNA of type II CRISPR loci if present in the organism. This chain is Ribonuclease 3, found in Streptococcus pneumoniae serotype 4 (strain ATCC BAA-334 / TIGR4).